A 398-amino-acid chain; its full sequence is MAENFSWLHRGIAEVFPQPTDAESDIESLEKRLATTDRPLRVKYGIDPTGADIHLGHSIPMRKLRGFQDAGHTAVLIIGDFTARIGDPTGKSEMRRQLTEEDVKQNAQTYLDQVRPILDFDTPGRLEVRYNSEWLSRLDLGKITELLATMTVGQMLAKEGFADRYKKENPIFLHEFLYPLMQGYDSVAIEADVELGGTDQKFNIAVGRDLQRHFGQKPQFGVLLPILIGTDGVQKMSKSLGNYVSLSEHPGQKYQKLQGVPDQMLEQYFELLTDLPIDKLPANPRDRQMLLAWEIVKQYHGEQAAQEAKEAAQSGGKEGAVPEFSLAGVPQFPVKLAYLLGATGLCKSTGEGKRKIQEGGVRLDGDRISDADTIFQQPDELQGRVLQVGKNKFVRLVL.

Residues 48–57 (PTGADIHLGH) carry the 'HIGH' region motif. The 'KMSKS' region motif lies at 235-239 (KMSKS). Lysine 238 contributes to the ATP binding site. Positions 334–398 (VKLAYLLGAT…GKNKFVRLVL (65 aa)) constitute an S4 RNA-binding domain.

It belongs to the class-I aminoacyl-tRNA synthetase family. TyrS type 2 subfamily. As to quaternary structure, homodimer.

The protein resides in the cytoplasm. The enzyme catalyses tRNA(Tyr) + L-tyrosine + ATP = L-tyrosyl-tRNA(Tyr) + AMP + diphosphate + H(+). Functionally, catalyzes the attachment of tyrosine to tRNA(Tyr) in a two-step reaction: tyrosine is first activated by ATP to form Tyr-AMP and then transferred to the acceptor end of tRNA(Tyr). The chain is Tyrosine--tRNA ligase from Trichormus variabilis (strain ATCC 29413 / PCC 7937) (Anabaena variabilis).